Reading from the N-terminus, the 279-residue chain is Thymidylate synthase 1 (279 aa).

141–142 lines the dUMP pocket; it reads RR. The active-site Nucleophile is C161. Residues 181 to 184, N192, and 222 to 224 contribute to the dUMP site; these read RSND and HVY. Position 184 (D184) interacts with (6R)-5,10-methylene-5,6,7,8-tetrahydrofolate. A278 is a binding site for (6R)-5,10-methylene-5,6,7,8-tetrahydrofolate.

It belongs to the thymidylate synthase family. Bacterial-type ThyA subfamily. As to quaternary structure, homodimer.

Its subcellular location is the cytoplasm. The enzyme catalyses dUMP + (6R)-5,10-methylene-5,6,7,8-tetrahydrofolate = 7,8-dihydrofolate + dTMP. It functions in the pathway pyrimidine metabolism; dTTP biosynthesis. Catalyzes the reductive methylation of 2'-deoxyuridine-5'-monophosphate (dUMP) to 2'-deoxythymidine-5'-monophosphate (dTMP) while utilizing 5,10-methylenetetrahydrofolate (mTHF) as the methyl donor and reductant in the reaction, yielding dihydrofolate (DHF) as a by-product. This enzymatic reaction provides an intracellular de novo source of dTMP, an essential precursor for DNA biosynthesis. This Bacillus spizizenii (strain ATCC 23059 / NRRL B-14472 / W23) (Bacillus subtilis subsp. spizizenii) protein is Thymidylate synthase 1.